The chain runs to 634 residues: Kelch-like protein 22 (634 aa).

Ala-2 is modified (N-acetylalanine). The region spanning 50–117 is the BTB domain; that stretch reads FDVVLVVEGR…IYTSELELSL (68 aa). 6 Kelch repeats span residues 299–349, 350–399, 400–446, 448–493, 494–544, and 545–593; these read CVVG…VLNN, FVYL…VVGK, YIYA…TLQG, MYIT…ALLD, KLFV…VLDN, and RIYV…VLTL. Position 463 is a phosphothreonine (Thr-463). Tyr-466 carries the phosphotyrosine modification. At Thr-475 the chain carries Phosphothreonine. A disordered region spans residues 600–634; it reads EQPRGTPNRSQADADFASEVMSVSDWEEFDNSSED. Phosphothreonine is present on Thr-605. A compositionally biased stretch (acidic residues) spans 624–634; that stretch reads DWEEFDNSSED.

As to quaternary structure, component of the BCR(KLHL22) E3 ubiquitin ligase complex, at least composed of CUL3, KLHL22 and RBX1. Interacts with PLK1. Interacts with DEPDC5 (via DEP domain); the interaction depends on amino acid availability. Interacts with YWHAE; required for the nuclear localization of KLHL22 upon amino acid starvation.

It localises to the cytoplasm. It is found in the cytosol. The protein localises to the cytoskeleton. Its subcellular location is the microtubule organizing center. The protein resides in the centrosome. It localises to the spindle. It is found in the nucleus. The protein localises to the lysosome. It functions in the pathway protein modification; protein ubiquitination. Substrate-specific adapter of a BCR (BTB-CUL3-RBX1) E3 ubiquitin ligase complex required for chromosome alignment and localization of PLK1 at kinetochores. The BCR(KLHL22) ubiquitin ligase complex mediates monoubiquitination of PLK1, leading to PLK1 dissociation from phosphoreceptor proteins and subsequent removal from kinetochores, allowing silencing of the spindle assembly checkpoint (SAC) and chromosome segregation. Monoubiquitination of PLK1 does not lead to PLK1 degradation. The BCR(KLHL22) ubiquitin ligase complex is also responsible for the amino acid-stimulated 'Lys-48' polyubiquitination and proteasomal degradation of DEPDC5. Through the degradation of DEPDC5, releases the GATOR1 complex-mediated inhibition of the TORC1 pathway. It is therefore an amino acid-dependent activator within the amino acid-sensing branch of the TORC1 pathway, indirectly regulating different cellular processes including cell growth and autophagy. This Rattus norvegicus (Rat) protein is Kelch-like protein 22.